The chain runs to 82 residues: Photosystem I iron-sulfur center (82 aa).

4Fe-4S ferredoxin-type domains follow at residues 2–31 (SHTV…MVPW) and 37–68 (GQIA…VRVY). [4Fe-4S] cluster-binding residues include C11, C14, C17, C21, C48, C51, C54, and C58.

In terms of assembly, the eukaryotic PSI reaction center is composed of at least 11 subunits. The cofactor is [4Fe-4S] cluster.

It localises to the plastid. The protein resides in the chloroplast thylakoid membrane. The enzyme catalyses reduced [plastocyanin] + hnu + oxidized [2Fe-2S]-[ferredoxin] = oxidized [plastocyanin] + reduced [2Fe-2S]-[ferredoxin]. Functionally, apoprotein for the two 4Fe-4S centers FA and FB of photosystem I (PSI); essential for photochemical activity. FB is the terminal electron acceptor of PSI, donating electrons to ferredoxin. The C-terminus interacts with PsaA/B/D and helps assemble the protein into the PSI complex. Required for binding of PsaD and PsaE to PSI. PSI is a plastocyanin/cytochrome c6-ferredoxin oxidoreductase, converting photonic excitation into a charge separation, which transfers an electron from the donor P700 chlorophyll pair to the spectroscopically characterized acceptors A0, A1, FX, FA and FB in turn. The chain is Photosystem I iron-sulfur center from Trieres chinensis (Marine centric diatom).